Reading from the N-terminus, the 376-residue chain is Protein-glutamate methylesterase/protein-glutamine glutaminase (376 aa).

The 118-residue stretch at 5 to 122 (KVLIVDDSAL…QHTFEDYTDE (118 aa)) folds into the Response regulatory domain. A 4-aspartylphosphate modification is found at Asp56. Residues 185 to 376 (SKPSHKVIAL…PEKILALIKK (192 aa)) enclose the CheB-type methylesterase domain. Catalysis depends on residues Ser197, His223, and Asp319.

Belongs to the CheB family. In terms of processing, phosphorylated by CheA. Phosphorylation of the N-terminal regulatory domain activates the methylesterase activity.

It is found in the cytoplasm. It carries out the reaction [protein]-L-glutamate 5-O-methyl ester + H2O = L-glutamyl-[protein] + methanol + H(+). The catalysed reaction is L-glutaminyl-[protein] + H2O = L-glutamyl-[protein] + NH4(+). Its function is as follows. Involved in chemotaxis. Part of a chemotaxis signal transduction system that modulates chemotaxis in response to various stimuli. Catalyzes the demethylation of specific methylglutamate residues introduced into the chemoreceptors (methyl-accepting chemotaxis proteins or MCP) by CheR. Also mediates the irreversible deamidation of specific glutamine residues to glutamic acid. The chain is Protein-glutamate methylesterase/protein-glutamine glutaminase from Hydrogenovibrio crunogenus (strain DSM 25203 / XCL-2) (Thiomicrospira crunogena).